A 264-amino-acid polypeptide reads, in one-letter code: Shikimate dehydrogenase (NADP(+)) (264 aa).

Shikimate-binding positions include 14-16 (SVS) and Thr61. The active-site Proton acceptor is the Lys65. Asn85 and Asp99 together coordinate shikimate. Residues 122–126 (GAGGA), 145–150 (NRTVSR), and Ala208 contribute to the NADP(+) site. Tyr210 is a binding site for shikimate. Position 231 (Gly231) interacts with NADP(+).

Belongs to the shikimate dehydrogenase family. Homodimer.

The enzyme catalyses shikimate + NADP(+) = 3-dehydroshikimate + NADPH + H(+). Its pathway is metabolic intermediate biosynthesis; chorismate biosynthesis; chorismate from D-erythrose 4-phosphate and phosphoenolpyruvate: step 4/7. Functionally, involved in the biosynthesis of the chorismate, which leads to the biosynthesis of aromatic amino acids. Catalyzes the reversible NADPH linked reduction of 3-dehydroshikimate (DHSA) to yield shikimate (SA). The sequence is that of Shikimate dehydrogenase (NADP(+)) from Natronomonas pharaonis (strain ATCC 35678 / DSM 2160 / CIP 103997 / JCM 8858 / NBRC 14720 / NCIMB 2260 / Gabara) (Halobacterium pharaonis).